Reading from the N-terminus, the 185-residue chain is Large ribosomal subunit protein uL5 (185 aa).

It belongs to the universal ribosomal protein uL5 family. As to quaternary structure, part of the 50S ribosomal subunit; part of the 5S rRNA/L5/L18/L25 subcomplex. Contacts the 5S rRNA and the P site tRNA. Forms a bridge to the 30S subunit in the 70S ribosome.

This is one of the proteins that bind and probably mediate the attachment of the 5S RNA into the large ribosomal subunit, where it forms part of the central protuberance. In the 70S ribosome it contacts protein S13 of the 30S subunit (bridge B1b), connecting the 2 subunits; this bridge is implicated in subunit movement. Contacts the P site tRNA; the 5S rRNA and some of its associated proteins might help stabilize positioning of ribosome-bound tRNAs. The protein is Large ribosomal subunit protein uL5 of Bartonella bacilliformis (strain ATCC 35685 / KC583 / Herrer 020/F12,63).